Here is a 210-residue protein sequence, read N- to C-terminus: MRPSNPRPPVTGPDSGPEAPFPIRLSGPVIKGFGRGSKELGIPTANIPVDGLEEVLPKELGVGVYYGVVALDPATAPAPSSSDSTSGDAAPILPAVLSIGYNPYYKNKTRSIEIHIMPSLTLPSPTAPSEEKEKVKFHKLPDFYGTKLNLLMLGYIRPEYDYVSMEALVEDIRIDCEVARASLLRPAYRVYLDGNEDETVSAQRDWLRSF.

Over residues 1 to 11 the composition is skewed to pro residues; the sequence is MRPSNPRPPVT. The disordered stretch occupies residues 1-24; the sequence is MRPSNPRPPVTGPDSGPEAPFPIR. Mg(2+)-binding residues include Thr-44 and Asn-46. The active-site Nucleophile is Glu-113.

This sequence belongs to the flavokinase family. It depends on Zn(2+) as a cofactor. The cofactor is Mg(2+).

The enzyme catalyses riboflavin + ATP = FMN + ADP + H(+). Its pathway is cofactor biosynthesis; FMN biosynthesis; FMN from riboflavin (ATP route): step 1/1. In terms of biological role, catalyzes the phosphorylation of riboflavin (vitamin B2) to form flavin mononucleotide (FMN) coenzyme. This is Riboflavin kinase (fmn1) from Emericella nidulans (strain FGSC A4 / ATCC 38163 / CBS 112.46 / NRRL 194 / M139) (Aspergillus nidulans).